A 645-amino-acid polypeptide reads, in one-letter code: Developmental regulatory protein wetA (645 aa).

Disordered stretches follow at residues 158 to 187 (SLHSPQRPQNTTSSDTPSPKPPNTDARKPK), 201 to 249 (TNLR…VSPP), 284 to 376 (YYGQ…QMHW), 461 to 578 (AQTF…DGAS), and 596 to 618 (GVAPSGSSKTKARREKEAQDRRR). Polar residues predominate over residues 240 to 249 (TQGNLPVSPP). Composition is skewed to basic residues over residues 315–326 (QHHHHPHHHHQQ) and 351–361 (QHQHQHHHQQQ). Residues 362–373 (QHHQQQQQQQHQ) are compositionally biased toward low complexity. Over residues 509-518 (GPSSSPTPAD) the composition is skewed to polar residues. The span at 528–546 (SSGASVSSLRSSSGRLPAS) shows a compositional bias: low complexity. The segment covering 562–572 (ISGSNSATSLG) has biased composition (polar residues).

Belongs to the wetA family.

Its function is as follows. BrlA, abaA and wetA are pivotal regulators of conidiophore development and conidium maturation. They act individually and together to regulate their own expression and that of numerous other sporulation-specific genes. BrlA, abaA and wetA act together to positively regulate the expression of the Pks1 gene cluster that mediates the biosynthesis of an anthraquinone derivative pigment that contributes to conidial pigmentation that provides protection from UV radiation, heat and cold stress. This chain is Developmental regulatory protein wetA, found in Metarhizium robertsii (strain ARSEF 23 / ATCC MYA-3075) (Metarhizium anisopliae (strain ARSEF 23)).